Here is a 114-residue protein sequence, read N- to C-terminus: Histone H3-7 (114 aa).

The span at Asn1–Lys17 shows a compositional bias: basic residues. The tract at residues Asn1–His32 is disordered. Low complexity predominate over residues Lys18 to Val28.

The protein belongs to the histone H3 family. The nucleosome is a histone octamer containing two molecules each of H2A, H2B, H3 and H4 assembled in one H3-H4 heterotetramer and two H2A-H2B heterodimers. The octamer wraps approximately 147 bp of DNA.

It is found in the nucleus. It localises to the chromosome. Functionally, core component of nucleosome. Nucleosomes wrap and compact DNA into chromatin, limiting DNA accessibility to the cellular machineries which require DNA as a template. Histones thereby play a central role in transcription regulation, DNA repair, DNA replication and chromosomal stability. DNA accessibility is regulated via a complex set of post-translational modifications of histones, also called histone code, and nucleosome remodeling. This is Histone H3-7 (H3-7) from Stylonychia lemnae (Ciliate).